Reading from the N-terminus, the 287-residue chain is Ribosomal RNA small subunit methyltransferase A (287 aa).

The S-adenosyl-L-methionine site is built by Asn28, Leu30, Gly55, Glu77, Asp103, and Asn123.

It belongs to the class I-like SAM-binding methyltransferase superfamily. rRNA adenine N(6)-methyltransferase family. RsmA subfamily.

It is found in the cytoplasm. It catalyses the reaction adenosine(1518)/adenosine(1519) in 16S rRNA + 4 S-adenosyl-L-methionine = N(6)-dimethyladenosine(1518)/N(6)-dimethyladenosine(1519) in 16S rRNA + 4 S-adenosyl-L-homocysteine + 4 H(+). Its function is as follows. Specifically dimethylates two adjacent adenosines (A1518 and A1519) in the loop of a conserved hairpin near the 3'-end of 16S rRNA in the 30S particle. May play a critical role in biogenesis of 30S subunits. The sequence is that of Ribosomal RNA small subunit methyltransferase A from Rhodopseudomonas palustris (strain TIE-1).